Here is a 342-residue protein sequence, read N- to C-terminus: Glycerol-1-phosphate dehydrogenase [NAD(P)+] (342 aa).

NAD(+)-binding positions include G84–D88 and T106–S109. D111 is a binding site for substrate. S115 is an NAD(+) binding site. Position 160 (D160) interacts with substrate. Residues D160 and H241 each coordinate Zn(2+). Residue H245 coordinates substrate. H260 lines the Zn(2+) pocket.

This sequence belongs to the glycerol-1-phosphate dehydrogenase family. As to quaternary structure, homodimer. It depends on Zn(2+) as a cofactor.

The protein resides in the cytoplasm. It catalyses the reaction sn-glycerol 1-phosphate + NAD(+) = dihydroxyacetone phosphate + NADH + H(+). The enzyme catalyses sn-glycerol 1-phosphate + NADP(+) = dihydroxyacetone phosphate + NADPH + H(+). The protein operates within membrane lipid metabolism; glycerophospholipid metabolism. Functionally, catalyzes the NAD(P)H-dependent reduction of dihydroxyacetonephosphate (DHAP or glycerone phosphate) to glycerol 1-phosphate (G1P). The G1P thus generated is used as the glycerophosphate backbone of phospholipids in the cellular membranes of Archaea. This is Glycerol-1-phosphate dehydrogenase [NAD(P)+] from Pyrobaculum aerophilum (strain ATCC 51768 / DSM 7523 / JCM 9630 / CIP 104966 / NBRC 100827 / IM2).